The chain runs to 212 residues: Peroxisomal membrane protein 4 (212 aa).

Transmembrane regions (helical) follow at residues glycine 97–glycine 117 and leucine 153–tyrosine 173. The N-linked (GlcNAc...) asparagine glycan is linked to asparagine 206.

It belongs to the peroxisomal membrane protein PXMP2/4 family. In terms of assembly, interacts with PEX19.

It localises to the peroxisome membrane. In Bos taurus (Bovine), this protein is Peroxisomal membrane protein 4 (PXMP4).